The primary structure comprises 392 residues: Stilbene synthase 4 (392 aa).

Position 55-58 (55-58 (KFNR)) interacts with substrate. Cysteine 164 is a catalytic residue. Residues leucine 267 and 305–307 (GGP) each bind substrate.

It belongs to the thiolase-like superfamily. Chalcone/stilbene synthases family. In terms of assembly, homodimer.

It is found in the cytoplasm. It carries out the reaction 4-coumaroyl-CoA + 3 malonyl-CoA + 3 H(+) = trans-resveratrol + 4 CO2 + 4 CoA. The protein operates within phytoalexin biosynthesis; 3,4',5-trihydroxystilbene biosynthesis; 3,4',5-trihydroxystilbene from trans-4-coumarate: step 2/2. In terms of biological role, mediates resistance to pathogens which are sensitive to stilbenes. The sequence is that of Stilbene synthase 4 from Vitis vinifera (Grape).